Here is a 1117-residue protein sequence, read N- to C-terminus: MGQTKSKIKSKYASYLSFIKILLKRGGVKVSTKNLIKLFQIIEQFCPWFPEQGTLDLKDWKRIGKELKQAGRKGNIIPLTVWNDWAIIKAALEPFQTEEDSISVSDAPGSGIIDCNEKTRKKSQKETESLHCEYVAEPVMAQSTQNVDYNQLQEVIYPETLKLEGKGPELVGPSESKPRGTSPLPAGQVPVTLQPQKQVKENKTQPPVAYQYWPPAELQYRPPPESQYGYPGMPPAPQGRAPYPQPPTRRLNPTAPPSRQGSELHEIIDKSRKEGDTEAWQFPVTLEPMPPGEGAQEGEPPTVEARYKSFSIKILKDMKEGVKQYGPNSPYMRTLLDSIAHGHRLIPYDWEILAKSSLSPSQFLQFKTWWIDGVQEQVRRNRAANPPVNIDADQLLGIGQNWSTISQQALMQNEAIEQVRAICLRAWEKIQDPGSTCPSFNTVRQGSKEPYPDFVARLQDVAQKSIADEKARKVIVELMAYENANPECQSAIKPLKGKVPAGSDVISEYVKACDGIGGAMHKAMLMAQAITGVVLGGQVRTFGGKCYNCGQIGHLKKNCPVLNKQNITIQATTTGREPPDLCPRCKKGKHWASQCRSKFDKNGQPLSGNEQRGQPQAPQQTGAFPIQPFVPQGFQGQQPPLSQVFQGISQLPQYNNCPPPQVAVQQVDLCTIQAVSLLPGEPPQKIPTGVYGPLPEGTVGLILGRSSLNLKGVQIHTSVVDSDYKGEIQLVISSSVPWSASPGDRIAQLLLLPYIKGGNSEIKRIGGLGSTDPTGKAAYWASQVSENRPVCKAIIQGKQFEGLVDTGADVSIIALNQWPKNWPKQKAVTGLVGIGTASEVYQSMEILHCLGPDNQESTVQPMITSIPLNLWGRDLLQQWGAEITMPAPLYSPTSQKIMTKRGYIPGKGLGKNEDGIKIPFEAKINQKREGIGYPFLGAATIEPPKPIPLTWKTEKPVWVNQWPLPKQKLEALHLLANEQLEKGHIEPSFSPWNSPVFVIQKKSGKWRMLTDLRAVNAVIQPMGPLQPGLPSPAMIPKDWPLIIIDLKDCFFTIPLAEQDCEKFAFTIPAINNKEPATRFQWKVLPQGMLNSPTICQTFVGRALQPVKVFRLLYYSLY.

Gly2 is lipidated: N-myristoyl glycine. The Reverse transcriptase domain maps to 58 to 195; it reads KDWKRIGKEL…AGQVPVTLQP (138 aa). The interval 165–264 is disordered; that stretch reads GKGPELVGPS…APPSRQGSEL (100 aa). A compositionally biased stretch (pro residues) spans 232–247; the sequence is GMPPAPQGRAPYPQPP. 2 CCHC-type zinc fingers span residues 544–561 and 580–597; these read GKCY…NCPV and DLCP…QCRS. Residues 598–629 form a disordered region; that stretch reads KFDKNGQPLSGNEQRGQPQAPQQTGAFPIQPF. Residues 604–622 are compositionally biased toward polar residues; sequence QPLSGNEQRGQPQAPQQTG. The 76-residue stretch at 800–875 folds into the Peptidase A2 domain; it reads FEGLVDTGAD…IPLNLWGRDL (76 aa). Residue Asp805 is part of the active site. Residues 890–936 form the G-patch domain; the sequence is YSPTSQKIMTKRGYIPGKGLGKNEDGIKIPFEAKINQKREGIGYPFL.

This sequence belongs to the beta type-B retroviral polymerase family. HERV class-II K(HML-2) pol subfamily. In terms of processing, myristoylation is essential for retroviral assembly. Alteration of the glycine residue leads to a block in the budding of particles and an accumulation of Gag inside the cell. Specific enzymatic cleavages may yield mature proteins.

The protein resides in the cell membrane. It carries out the reaction Processing at the authentic HIV-1 PR recognition site and release of the mature p17 matrix and the p24 capsid protein, as a result of the cleavage of the -SQNY-|-PIVQ- cleavage site.. It catalyses the reaction DNA(n) + a 2'-deoxyribonucleoside 5'-triphosphate = DNA(n+1) + diphosphate. The catalysed reaction is Endonucleolytic cleavage to 5'-phosphomonoester.. In terms of biological role, the products of the Gag polyproteins of infectious retroviruses perform highly complex orchestrated tasks during the assembly, budding, maturation, and infection stages of the viral replication cycle. During viral assembly, the proteins form membrane associations and self-associations that ultimately result in budding of an immature virion from the infected cell. Gag precursors also function during viral assembly to selectively bind and package two plus strands of genomic RNA. Endogenous Gag proteins may have kept, lost or modified their original function during evolution. Functionally, early post-infection, the reverse transcriptase converts the viral RNA genome into double-stranded viral DNA. The RNase H domain of the reverse transcriptase performs two functions. It degrades the RNA template and specifically removes the RNA primer from the RNA/DNA hybrid. Following nuclear import, the integrase catalyzes the insertion of the linear, double-stranded viral DNA into the host cell chromosome. Endogenous Pol proteins may have kept, lost or modified their original function during evolution. This Homo sapiens (Human) protein is Endogenous retrovirus group K member 9 Pol protein (ERVK-9).